Reading from the N-terminus, the 337-residue chain is Cysteinyl leukotriene receptor 1 (337 aa).

Topologically, residues 1–28 (MDETGNLTVSSATCHDTIDDFRNQVYST) are extracellular. An N-linked (GlcNAc...) asparagine glycan is attached at N6. Residues 29-49 (LYSMISVVGFFGNGFVLYVLI) traverse the membrane as a helical segment. At 50–57 (KTYHKKSA) the chain is on the cytoplasmic side. Residues 58–78 (FQVYMINLAVADLLCVCTLPL) traverse the membrane as a helical segment. Residues 79–106 (RVVYYVHKGIWLFGDFLCRLSTYALYVN) are Extracellular-facing. Cysteines 96 and 173 form a disulfide. Residues 107–127 (LYCSIFFMTAMSFFRCIAIVF) form a helical membrane-spanning segment. The Cytoplasmic segment spans residues 128–141 (PVQNINLVTQKKAR). A helical transmembrane segment spans residues 142-162 (FVCVGIWIFVILTSSPFLMAK). The Extracellular portion of the chain corresponds to 163–193 (PQKDEKNNTKCFEPPQDNQTKNHVLVLHYVS). Residues N169 and N180 are each glycosylated (N-linked (GlcNAc...) asparagine). A helical membrane pass occupies residues 194-214 (LFVGFIIPFVIIIVCYTMIIL). Topologically, residues 215-230 (TLLKKSMKKNLSSHKK) are cytoplasmic. Residues 231 to 251 (AIGMIMVVTAAFLVSFMPYHI) form a helical membrane-spanning segment. The Extracellular portion of the chain corresponds to 252-276 (QRTIHLHFLHNETKPCDSVLRMQKS). A glycan (N-linked (GlcNAc...) asparagine) is linked at N262. Residues 277–297 (VVITLSLAASNCCFDPLLYFF) traverse the membrane as a helical segment. Topologically, residues 298-337 (SGGNFRKRLSTFRKHSLSSVTYVPRKKASLPEKGEEICKV) are cytoplasmic.

This sequence belongs to the G-protein coupled receptor 1 family. In terms of tissue distribution, widely expressed, with highest levels in spleen and peripheral blood leukocytes. Lower expression in several tissues, such as lung (mostly in smooth muscle bundles and alveolar macrophages), placenta, small intestine, pancreas, colon and heart.

It localises to the cell membrane. Its function is as follows. Receptor for cysteinyl leukotrienes mediating bronchoconstriction of individuals with and without asthma. Stimulation by LTD4 results in the contraction and proliferation of smooth muscle, edema, eosinophil migration and damage to the mucus layer in the lung. This response is mediated via a G-protein that activates a phosphatidylinositol-calcium second messenger system. The rank order of affinities for the leukotrienes is LTD4 &gt;&gt; LTE4 = LTC4 &gt;&gt; LTB4. This is Cysteinyl leukotriene receptor 1 (CYSLTR1) from Homo sapiens (Human).